Consider the following 216-residue polypeptide: Large ribosomal subunit protein uL1 (216 aa).

It belongs to the universal ribosomal protein uL1 family. Part of the 50S ribosomal subunit.

In terms of biological role, binds directly to 23S rRNA. Probably involved in E site tRNA release. Functionally, protein L1 is also a translational repressor protein, it controls the translation of its operon by binding to its mRNA. In Thermococcus kodakarensis (strain ATCC BAA-918 / JCM 12380 / KOD1) (Pyrococcus kodakaraensis (strain KOD1)), this protein is Large ribosomal subunit protein uL1.